The primary structure comprises 106 residues: MIPGEYRISTGNIAINTGRETCTIVVENHGDRPVQVGSHYHFYEVNPALRFDRQAARGFRLNIPAGTAVRFEPGQKREVELVRVAGAQRIFGFRGEVMGSLEADND.

The protein belongs to the urease beta subunit family. Heterotrimer of UreA (gamma), UreB (beta) and UreC (alpha) subunits. Three heterotrimers associate to form the active enzyme.

It is found in the cytoplasm. The enzyme catalyses urea + 2 H2O + H(+) = hydrogencarbonate + 2 NH4(+). It functions in the pathway nitrogen metabolism; urea degradation; CO(2) and NH(3) from urea (urease route): step 1/1. The sequence is that of Urease subunit beta from Citrobacter koseri (strain ATCC BAA-895 / CDC 4225-83 / SGSC4696).